The chain runs to 158 residues: Small ribosomal subunit protein uS7 (158 aa).

It belongs to the universal ribosomal protein uS7 family. As to quaternary structure, part of the 30S ribosomal subunit. Contacts proteins S9 and S11.

Functionally, one of the primary rRNA binding proteins, it binds directly to 16S rRNA where it nucleates assembly of the head domain of the 30S subunit. Is located at the subunit interface close to the decoding center, probably blocks exit of the E-site tRNA. The protein is Small ribosomal subunit protein uS7 of Acidiphilium cryptum (strain JF-5).